An 811-amino-acid polypeptide reads, in one-letter code: Leucine--tRNA ligase (811 aa).

The 'HIGH' region signature appears at 40-50 (PYPSGRLHMGH). Residues 579–583 (KMSKS) carry the 'KMSKS' region motif. Lysine 582 lines the ATP pocket.

Belongs to the class-I aminoacyl-tRNA synthetase family.

It localises to the cytoplasm. The enzyme catalyses tRNA(Leu) + L-leucine + ATP = L-leucyl-tRNA(Leu) + AMP + diphosphate. The protein is Leucine--tRNA ligase of Campylobacter fetus subsp. fetus (strain 82-40).